A 213-amino-acid chain; its full sequence is RPW8-like protein 3 (213 aa).

In terms of domain architecture, RPW8 spans 1 to 153 (MPVSEIMAGA…ITRQPTDCIC (153 aa)). Residues 7–23 (MAGAALGLALQVLHDAI) traverse the membrane as a helical segment. Coiled coils occupy residues 70 to 93 (EDLK…RRRN) and 125 to 147 (VDIK…ITRQ). An N-linked (GlcNAc...) asparagine glycan is attached at asparagine 157.

This sequence belongs to the plant RPW8 protein family.

The protein localises to the membrane. Its function is as follows. Probable disease resistance (R) protein. This Arabidopsis thaliana (Mouse-ear cress) protein is RPW8-like protein 3.